Here is a 316-residue protein sequence, read N- to C-terminus: Ribose-phosphate pyrophosphokinase (316 aa).

ATP is bound by residues 41-43 (DGE) and 100-101 (RQ). Mg(2+) is bound by residues H134 and D175. Residue K198 is part of the active site. Residues R200, D224, and 228-232 (DTARS) contribute to the D-ribose 5-phosphate site.

Belongs to the ribose-phosphate pyrophosphokinase family. Class I subfamily. In terms of assembly, homohexamer. Mg(2+) serves as cofactor.

It localises to the cytoplasm. It catalyses the reaction D-ribose 5-phosphate + ATP = 5-phospho-alpha-D-ribose 1-diphosphate + AMP + H(+). It participates in metabolic intermediate biosynthesis; 5-phospho-alpha-D-ribose 1-diphosphate biosynthesis; 5-phospho-alpha-D-ribose 1-diphosphate from D-ribose 5-phosphate (route I): step 1/1. Its function is as follows. Involved in the biosynthesis of the central metabolite phospho-alpha-D-ribosyl-1-pyrophosphate (PRPP) via the transfer of pyrophosphoryl group from ATP to 1-hydroxyl of ribose-5-phosphate (Rib-5-P). This is Ribose-phosphate pyrophosphokinase from Thermosipho africanus (strain TCF52B).